A 160-amino-acid polypeptide reads, in one-letter code: MKLNELRDNHGARPKSKRLGRGIGSGKGKTSGKGVKGQKAREGVSLNGFEGGQLPIYRRLPKRGFVNIFRKEYAPLNIGTLNDAIEAGRVDASQEITEDALRAAGLVRGGKVAGVRLLARGEITRAVKITVAGASAAARAAVEQAGGSITTTVVAEAAEA.

The segment covering M1 to G11 has biased composition (basic and acidic residues). Residues M1–K39 are disordered. Gly residues predominate over residues R21–V35.

Belongs to the universal ribosomal protein uL15 family. In terms of assembly, part of the 50S ribosomal subunit.

Binds to the 23S rRNA. This is Large ribosomal subunit protein uL15 from Granulibacter bethesdensis (strain ATCC BAA-1260 / CGDNIH1).